A 584-amino-acid polypeptide reads, in one-letter code: Pectinesterase 3 (584 aa).

An N-terminal signal peptide occupies residues 1-50; that stretch reads MTRIKEFFTKLSESSTNQNISNIPKKKKKLFLALFATLLVVAAVIGIVAG. Residues 51-266 constitute a propeptide that is removed on maturation; the sequence is VNSRKNSGDN…LSTGDRRLLQ (216 aa). N-linked (GlcNAc...) asparagine glycans are attached at residues asparagine 108, asparagine 129, and asparagine 226. 2 residues coordinate substrate: threonine 348 and glutamine 378. Aspartate 401 functions as the Proton donor in the catalytic mechanism. Cysteine 415 and cysteine 435 are disulfide-bonded. Aspartate 422 functions as the Nucleophile in the catalytic mechanism. Residues arginine 490 and tryptophan 492 each coordinate substrate.

The protein in the N-terminal section; belongs to the PMEI family. It in the C-terminal section; belongs to the pectinesterase family. In the peel, expression is localized to the region of the flavedo close to the oil glands, and to the innermost layer of the albedo. In the lamella, expression is localized to the cell layers opposing the fruit tissue, and to the parenchyma surrounding the vascular tissue. In the fruit vesicles, expression is restricted to the peripheral cell layers and stalk cells. High levels of expression are detected in the core matrix.

It is found in the secreted. Its subcellular location is the cell wall. It carries out the reaction [(1-&gt;4)-alpha-D-galacturonosyl methyl ester](n) + n H2O = [(1-&gt;4)-alpha-D-galacturonosyl](n) + n methanol + n H(+). Its pathway is glycan metabolism; pectin degradation; 2-dehydro-3-deoxy-D-gluconate from pectin: step 1/5. Its function is as follows. Acts in the modification of cell walls via demethylesterification of cell wall pectin. The protein is Pectinesterase 3 of Citrus sinensis (Sweet orange).